Consider the following 80-residue polypeptide: Small ribosomal subunit protein bS18 (80 aa).

This sequence belongs to the bacterial ribosomal protein bS18 family. In terms of assembly, part of the 30S ribosomal subunit. Forms a tight heterodimer with protein bS6.

Functionally, binds as a heterodimer with protein bS6 to the central domain of the 16S rRNA, where it helps stabilize the platform of the 30S subunit. In Staphylococcus epidermidis (strain ATCC 35984 / DSM 28319 / BCRC 17069 / CCUG 31568 / BM 3577 / RP62A), this protein is Small ribosomal subunit protein bS18.